Here is a 222-residue protein sequence, read N- to C-terminus: 7-cyano-7-deazaguanine synthase (222 aa).

Residue 11-21 participates in ATP binding; it reads FSGGQDSTTCL. Zn(2+) contacts are provided by Cys187, Cys195, Cys198, and Cys201.

The protein belongs to the QueC family. Zn(2+) is required as a cofactor.

The enzyme catalyses 7-carboxy-7-deazaguanine + NH4(+) + ATP = 7-cyano-7-deazaguanine + ADP + phosphate + H2O + H(+). It functions in the pathway purine metabolism; 7-cyano-7-deazaguanine biosynthesis. Its function is as follows. Catalyzes the ATP-dependent conversion of 7-carboxy-7-deazaguanine (CDG) to 7-cyano-7-deazaguanine (preQ(0)). This Actinobacillus pleuropneumoniae serotype 7 (strain AP76) protein is 7-cyano-7-deazaguanine synthase.